Reading from the N-terminus, the 511-residue chain is Maturase K (511 aa).

This sequence belongs to the intron maturase 2 family. MatK subfamily.

It is found in the plastid. The protein resides in the chloroplast. Functionally, usually encoded in the trnK tRNA gene intron. Probably assists in splicing its own and other chloroplast group II introns. The sequence is that of Maturase K from Nandina domestica (Heavenly bamboo).